We begin with the raw amino-acid sequence, 745 residues long: Eukaryotic translation initiation factor 3 subunit B (745 aa).

An RRM domain is found at 41–129 (DVIVIEGVPV…HRFSVHRFTD (89 aa)). WD repeat units follow at residues 189 to 230 (EHSR…RFMR), 251 to 293 (WSHE…RSFP), 303 to 344 (GQLK…LLEK), and 580 to 625 (GEHY…LQKH). The stretch at 644-745 (GKDEQKRVRK…IIEETEEVLA (102 aa)) forms a coiled coil.

Belongs to the eIF-3 subunit B family. Component of the eukaryotic translation initiation factor 3 (eIF-3) complex.

The protein resides in the cytoplasm. RNA-binding component of the eukaryotic translation initiation factor 3 (eIF-3) complex, which is involved in protein synthesis of a specialized repertoire of mRNAs and, together with other initiation factors, stimulates binding of mRNA and methionyl-tRNAi to the 40S ribosome. The eIF-3 complex specifically targets and initiates translation of a subset of mRNAs involved in cell proliferation. This Mycosarcoma maydis (Corn smut fungus) protein is Eukaryotic translation initiation factor 3 subunit B.